The chain runs to 140 residues: Large ribosomal subunit protein uL3 (140 aa).

Belongs to the universal ribosomal protein uL3 family. Part of the 50S ribosomal subunit. Forms a cluster with proteins L14 and L19.

In terms of biological role, one of the primary rRNA binding proteins, it binds directly near the 3'-end of the 23S rRNA, where it nucleates assembly of the 50S subunit. The sequence is that of Large ribosomal subunit protein uL3 (rplC) from Planobispora rosea.